Here is a 1072-residue protein sequence, read N- to C-terminus: Rho family-interacting cell polarization regulator 2 (1072 aa).

Positions 83 to 112 form a coiled coil; that stretch reads NGLDEYLEVHQTELDKLTAQLKDMRRNSRL. Residues 173 to 470 form a necessary for interaction with NCAM and myoblast protrusion formation region; that stretch reads RESLTEINRS…ATTATQHRAR (298 aa). Disordered stretches follow at residues 439 to 465 and 683 to 718; these read DRVP…TTAT and EVEK…AGSP. Residues 447-460 show a composition bias toward polar residues; the sequence is AEPSSAHVTSSPDI. Residues 683–698 are compositionally biased toward basic and acidic residues; that stretch reads EVEKNSYRTEHPEARG.

Belongs to the RIPOR family. In terms of assembly, homooligomer; homooligomerization is regulated by RHOC and leads to the formation of concatemers through the association of N- and C-termini. Interacts with NCAM; this interaction is necessary for myoblast protrusion formation. As to expression, expressed in myoblast and myotubes (at protein level). Expressed in brain, eyes and skeletal muscle.

It is found in the cytoplasm. It localises to the cytoskeleton. The protein localises to the cell projection. The protein resides in the filopodium. Its subcellular location is the apical cell membrane. It is found in the stereocilium. It localises to the stereocilium membrane. Acts as an inhibitor of the small GTPase RHOA and plays several roles in the regulation of myoblast and hair cell differentiation, lymphocyte T proliferation and neutrophil polarization. Plays a role in fetal mononuclear myoblast differentiation by promoting filopodia and myotube formation. Maintains naive T lymphocytes in a quiescent state and prevents chemokine-induced T lymphocyte responses, such as cell adhesion, polarization and migration. Involved also in the regulation of neutrophil polarization, chemotaxis and adhesion. Required for normal development of inner and outer hair cell stereocilia within the cochlea of the inner ear. Plays a role for maintaining the structural organization of the basal domain of stereocilia. Involved in mechanosensory hair cell function. Required for normal hearing. This is Rho family-interacting cell polarization regulator 2 from Coturnix japonica (Japanese quail).